The chain runs to 264 residues: Sulfur carrier protein FdhD (264 aa).

Catalysis depends on Cys-107, which acts as the Cysteine persulfide intermediate.

Belongs to the FdhD family.

Its subcellular location is the cytoplasm. Required for formate dehydrogenase (FDH) activity. Acts as a sulfur carrier protein that transfers sulfur from IscS to the molybdenum cofactor prior to its insertion into FDH. This chain is Sulfur carrier protein FdhD, found in Staphylococcus haemolyticus (strain JCSC1435).